The chain runs to 168 residues: Putative B3 domain-containing protein Os10g0158600 (168 aa).

Positions 4–97 form a DNA-binding region, TF-B3; that stretch reads VVFASARLNA…KARVMLLNRQ (94 aa). The interval 105–151 is disordered; the sequence is KTPSTTSSDKNRSLSPSDQLTRASTSAHPSTSKSIPPLRNGTGSTKR. The span at 106-138 shows a compositional bias: polar residues; that stretch reads TPSTTSSDKNRSLSPSDQLTRASTSAHPSTSKS.

Its subcellular location is the nucleus. This chain is Putative B3 domain-containing protein Os10g0158600, found in Oryza sativa subsp. japonica (Rice).